A 403-amino-acid chain; its full sequence is Phosphopentomutase (403 aa).

Residues Asp-13, Asp-298, His-303, Asp-339, His-340, and His-351 each coordinate Mn(2+).

Belongs to the phosphopentomutase family. It depends on Mn(2+) as a cofactor.

The protein resides in the cytoplasm. It carries out the reaction 2-deoxy-alpha-D-ribose 1-phosphate = 2-deoxy-D-ribose 5-phosphate. It catalyses the reaction alpha-D-ribose 1-phosphate = D-ribose 5-phosphate. It participates in carbohydrate degradation; 2-deoxy-D-ribose 1-phosphate degradation; D-glyceraldehyde 3-phosphate and acetaldehyde from 2-deoxy-alpha-D-ribose 1-phosphate: step 1/2. Its function is as follows. Isomerase that catalyzes the conversion of deoxy-ribose 1-phosphate (dRib-1-P) and ribose 1-phosphate (Rib-1-P) to deoxy-ribose 5-phosphate (dRib-5-P) and ribose 5-phosphate (Rib-5-P), respectively. The chain is Phosphopentomutase from Streptococcus pyogenes serotype M2 (strain MGAS10270).